A 287-amino-acid chain; its full sequence is Elongation factor Ts (287 aa).

The involved in Mg(2+) ion dislocation from EF-Tu stretch occupies residues 80 to 83 (TDFL).

The protein belongs to the EF-Ts family.

It is found in the cytoplasm. In terms of biological role, associates with the EF-Tu.GDP complex and induces the exchange of GDP to GTP. It remains bound to the aminoacyl-tRNA.EF-Tu.GTP complex up to the GTP hydrolysis stage on the ribosome. This is Elongation factor Ts from Pseudomonas syringae pv. tomato (strain ATCC BAA-871 / DC3000).